Here is a 304-residue protein sequence, read N- to C-terminus: Glycine--tRNA ligase alpha subunit (304 aa).

It belongs to the class-II aminoacyl-tRNA synthetase family. Tetramer of two alpha and two beta subunits.

The protein resides in the cytoplasm. It catalyses the reaction tRNA(Gly) + glycine + ATP = glycyl-tRNA(Gly) + AMP + diphosphate. This is Glycine--tRNA ligase alpha subunit from Photorhabdus laumondii subsp. laumondii (strain DSM 15139 / CIP 105565 / TT01) (Photorhabdus luminescens subsp. laumondii).